Reading from the N-terminus, the 371-residue chain is Peptide chain release factor 2 (371 aa).

Gln-253 carries the post-translational modification N5-methylglutamine.

Belongs to the prokaryotic/mitochondrial release factor family. Methylated by PrmC. Methylation increases the termination efficiency of RF2.

It is found in the cytoplasm. Functionally, peptide chain release factor 2 directs the termination of translation in response to the peptide chain termination codons UGA and UAA. This chain is Peptide chain release factor 2, found in Mycobacterium marinum (strain ATCC BAA-535 / M).